The sequence spans 297 residues: uncharacterized protein (297 aa).

3 disordered regions span residues 19 to 133 (NEVD…EEKE), 147 to 214 (AEDD…VGIA), and 226 to 277 (EKTS…SKEA). Basic and acidic residues predominate over residues 41–52 (EEPKNEKEKHDD). Residues 77–87 (PAEDDEEDEEF) show a composition bias toward acidic residues. Residues 88–101 (PSQSYGPSIPSNFR) show a composition bias toward polar residues. Basic and acidic residues-rich tracts occupy residues 147–161 (AEDD…REEW) and 236–268 (IHQK…EVRG).

This is an uncharacterized protein from Caenorhabditis elegans.